A 131-amino-acid chain; its full sequence is Profilin-8 (131 aa).

An intrachain disulfide couples cysteine 13 to cysteine 115. Positions 81 to 97 match the Involved in PIP2 interaction motif; sequence AVIRGKKGAGGITIKKT. Threonine 111 bears the Phosphothreonine mark.

The protein belongs to the profilin family. As to quaternary structure, occurs in many kinds of cells as a complex with monomeric actin in a 1:1 ratio. Phosphorylated by MAP kinases.

The protein resides in the cytoplasm. It is found in the cytoskeleton. Binds to actin and affects the structure of the cytoskeleton. At high concentrations, profilin prevents the polymerization of actin, whereas it enhances it at low concentrations. The protein is Profilin-8 of Phleum pratense (Common timothy).